The sequence spans 247 residues: 3,4-dihydroxy-2-butanone 4-phosphate synthase (247 aa).

Residues 38–39 (RE), Asp-43, 179–183 (RMGQT), and Glu-203 contribute to the D-ribulose 5-phosphate site. Residue Glu-39 participates in Mg(2+) binding.

This sequence belongs to the DHBP synthase family. In terms of assembly, homodimer. It depends on Mg(2+) as a cofactor. The cofactor is Mn(2+).

The enzyme catalyses D-ribulose 5-phosphate = (2S)-2-hydroxy-3-oxobutyl phosphate + formate + H(+). The protein operates within cofactor biosynthesis; riboflavin biosynthesis; 2-hydroxy-3-oxobutyl phosphate from D-ribulose 5-phosphate: step 1/1. Functionally, catalyzes the conversion of D-ribulose 5-phosphate to formate and 3,4-dihydroxy-2-butanone 4-phosphate. The chain is 3,4-dihydroxy-2-butanone 4-phosphate synthase from Methanosarcina acetivorans (strain ATCC 35395 / DSM 2834 / JCM 12185 / C2A).